A 227-amino-acid chain; its full sequence is Orotate phosphoribosyltransferase (227 aa).

A 5-phospho-alpha-D-ribose 1-diphosphate-binding site is contributed by Lys-26. 34-35 contacts orotate; sequence FF. 5-phospho-alpha-D-ribose 1-diphosphate-binding positions include 72 to 73, Arg-98, Lys-99, Lys-102, His-104, and 123 to 131; these read YK and DDVVSAGLS. Positions 127 and 155 each coordinate orotate.

This sequence belongs to the purine/pyrimidine phosphoribosyltransferase family. PyrE subfamily. In terms of assembly, homodimer. Mg(2+) serves as cofactor.

The catalysed reaction is orotidine 5'-phosphate + diphosphate = orotate + 5-phospho-alpha-D-ribose 1-diphosphate. Its pathway is pyrimidine metabolism; UMP biosynthesis via de novo pathway; UMP from orotate: step 1/2. Functionally, catalyzes the transfer of a ribosyl phosphate group from 5-phosphoribose 1-diphosphate to orotate, leading to the formation of orotidine monophosphate (OMP). This Nitrosomonas europaea (strain ATCC 19718 / CIP 103999 / KCTC 2705 / NBRC 14298) protein is Orotate phosphoribosyltransferase.